A 78-amino-acid polypeptide reads, in one-letter code: Large ribosomal subunit protein uL29 (78 aa).

The protein belongs to the universal ribosomal protein uL29 family.

In Rhodococcus erythropolis (strain PR4 / NBRC 100887), this protein is Large ribosomal subunit protein uL29.